An 812-amino-acid polypeptide reads, in one-letter code: INO80 complex subunit D (812 aa).

Disordered regions lie at residues 521 to 573 (NSRK…LCMP) and 581 to 600 (EVSS…ELPD). Residues 524-558 (KVQHHQQRKPRKKTKPPALTKKTKKKRRRGPRRPQ) show a composition bias toward basic residues. Residues 585-595 (IRSPSTPNLST) show a composition bias toward polar residues.

This sequence belongs to the INO80D family. Component of the chromatin-remodeling INO80 complex.

It is found in the nucleus. Functionally, putative regulatory component of the chromatin remodeling INO80 complex which is involved in transcriptional regulation, DNA replication and probably DNA repair. This chain is INO80 complex subunit D, found in Xenopus laevis (African clawed frog).